The following is a 134-amino-acid chain: Large ribosomal subunit protein bL21 (134 aa).

It belongs to the bacterial ribosomal protein bL21 family. In terms of assembly, part of the 50S ribosomal subunit. Contacts protein L20.

This protein binds to 23S rRNA in the presence of protein L20. In Pelagibacter ubique (strain HTCC1062), this protein is Large ribosomal subunit protein bL21.